The sequence spans 260 residues: Taurine import ATP-binding protein TauB (260 aa).

The region spanning 6–235 (AHQVSVVYAS…RYAAGESMRS (230 aa)) is the ABC transporter domain. ATP is bound at residue 40–47 (GASGCGKS).

This sequence belongs to the ABC transporter superfamily. Taurine importer (TC 3.A.1.17.1) family. As to quaternary structure, the complex is composed of two ATP-binding proteins (TauB), two transmembrane proteins (TauC) and a solute-binding protein (TauA).

The protein resides in the cell inner membrane. It catalyses the reaction taurine(out) + ATP + H2O = taurine(in) + ADP + phosphate + H(+). Part of the ABC transporter complex TauABC involved in taurine import. Responsible for energy coupling to the transport system. The polypeptide is Taurine import ATP-binding protein TauB (Burkholderia thailandensis (strain ATCC 700388 / DSM 13276 / CCUG 48851 / CIP 106301 / E264)).